The following is a 612-amino-acid chain: Transcription factor ffsR (612 aa).

Residues 1–12 (MDTLTAPTTQSE) show a composition bias toward polar residues. Residues 1-21 (MDTLTAPTTQSEQPPPPLTAS) form a disordered region. Positions 28 to 60 (CDRCRSHKLRCNRDLMTSTNSPCQRCRKARVKC) form a DNA-binding region, zn(2)-C6 fungal-type. The segment covering 73-82 (EELKNGENVH) has biased composition (basic and acidic residues). 3 disordered regions span residues 73–130 (EELK…SMSG), 154–249 (DGST…VTSS), and 451–470 (GQGP…TTTN). 3 stretches are compositionally biased toward polar residues: residues 92 to 103 (SHRTASTPSNHA), 154 to 169 (DGST…TNGS), and 238 to 249 (LTQQHPAGVTSS). Residues 458 to 470 (PSQGSSSRSTTTN) show a composition bias toward low complexity.

It is found in the nucleus. Functionally, transcription factor that specifically regulates the expression of the gene cluster that mediates the biosynthesis of the cytotoxic leucine-containing cytochalasans, including aspochalasin C, aspochalasin E, TMC-169, flavichalasine F, aspergillin PZ, aspochalasin M and flavichalasine G. The polypeptide is Transcription factor ffsR (Aspergillus flavipes).